Consider the following 89-residue polypeptide: Small ribosomal subunit protein bS16 (89 aa).

The protein belongs to the bacterial ribosomal protein bS16 family.

The sequence is that of Small ribosomal subunit protein bS16 from Nitrosomonas europaea (strain ATCC 19718 / CIP 103999 / KCTC 2705 / NBRC 14298).